A 320-amino-acid chain; its full sequence is Cytochrome f (320 aa).

Residues 1–35 (MQTRNTLSWIKEEITRSISVSLMIYIITWASISNA) form the signal peptide. Heme contacts are provided by Tyr-36, Cys-56, Cys-59, and His-60. Residues 286-306 (VQGLLFFLASVVLAQIFLVLK) form a helical membrane-spanning segment.

This sequence belongs to the cytochrome f family. The 4 large subunits of the cytochrome b6-f complex are cytochrome b6, subunit IV (17 kDa polypeptide, petD), cytochrome f and the Rieske protein, while the 4 small subunits are PetG, PetL, PetM and PetN. The complex functions as a dimer. The cofactor is heme.

It is found in the plastid. Its subcellular location is the chloroplast thylakoid membrane. Its function is as follows. Component of the cytochrome b6-f complex, which mediates electron transfer between photosystem II (PSII) and photosystem I (PSI), cyclic electron flow around PSI, and state transitions. This Carica papaya (Papaya) protein is Cytochrome f.